Here is a 36-residue protein sequence, read N- to C-terminus: Cecropin-D (36 aa).

The residue at position 36 (K36) is a Lysine amide.

Belongs to the cecropin family.

It localises to the secreted. Functionally, cecropins have lytic and antibacterial activity against several Gram-positive and Gram-negative bacteria. This chain is Cecropin-D, found in Antheraea pernyi (Chinese oak silk moth).